A 288-amino-acid chain; its full sequence is Acetyl-coenzyme A carboxylase carboxyl transferase subunit beta, chloroplastic (288 aa).

Residues leucine 30–lysine 288 enclose the CoA carboxyltransferase N-terminal domain. Zn(2+) is bound by residues cysteine 34, cysteine 37, cysteine 53, and cysteine 56. The segment at cysteine 34–cysteine 56 adopts a C4-type zinc-finger fold.

It belongs to the AccD/PCCB family. As to quaternary structure, acetyl-CoA carboxylase is a heterohexamer composed of biotin carboxyl carrier protein, biotin carboxylase and 2 subunits each of ACCase subunit alpha and ACCase plastid-coded subunit beta (accD). It depends on Zn(2+) as a cofactor.

Its subcellular location is the plastid. The protein resides in the chloroplast stroma. The enzyme catalyses N(6)-carboxybiotinyl-L-lysyl-[protein] + acetyl-CoA = N(6)-biotinyl-L-lysyl-[protein] + malonyl-CoA. The protein operates within lipid metabolism; malonyl-CoA biosynthesis; malonyl-CoA from acetyl-CoA: step 1/1. Component of the acetyl coenzyme A carboxylase (ACC) complex. Biotin carboxylase (BC) catalyzes the carboxylation of biotin on its carrier protein (BCCP) and then the CO(2) group is transferred by the transcarboxylase to acetyl-CoA to form malonyl-CoA. This chain is Acetyl-coenzyme A carboxylase carboxyl transferase subunit beta, chloroplastic, found in Pyropia yezoensis (Susabi-nori).